Consider the following 242-residue polypeptide: 1-(5-phosphoribosyl)-5-[(5-phosphoribosylamino)methylideneamino] imidazole-4-carboxamide isomerase (242 aa).

Asp8 acts as the Proton acceptor in catalysis. Asp129 (proton donor) is an active-site residue.

The protein belongs to the HisA/HisF family.

Its subcellular location is the cytoplasm. It catalyses the reaction 1-(5-phospho-beta-D-ribosyl)-5-[(5-phospho-beta-D-ribosylamino)methylideneamino]imidazole-4-carboxamide = 5-[(5-phospho-1-deoxy-D-ribulos-1-ylimino)methylamino]-1-(5-phospho-beta-D-ribosyl)imidazole-4-carboxamide. The protein operates within amino-acid biosynthesis; L-histidine biosynthesis; L-histidine from 5-phospho-alpha-D-ribose 1-diphosphate: step 4/9. The chain is 1-(5-phosphoribosyl)-5-[(5-phosphoribosylamino)methylideneamino] imidazole-4-carboxamide isomerase from Maridesulfovibrio salexigens (strain ATCC 14822 / DSM 2638 / NCIMB 8403 / VKM B-1763) (Desulfovibrio salexigens).